The chain runs to 495 residues: Probable polyamine transporter At1g31830 (495 aa).

11 helical membrane-spanning segments follow: residues 49-69 (VSML…PFGV), 79-99 (LLAL…EALI), 112-132 (GYVV…QGWM), 156-176 (VPAL…TILL), 186-206 (IVGW…AVMG), 230-250 (LYLN…TLAG), 267-287 (VILV…AIPL), 357-377 (TPLL…WLSF), 380-400 (IVAA…IAFV), 417-437 (IGTT…CAVV), and 442-462 (LKVA…HPLL).

Belongs to the amino acid-polyamine-organocation (APC) superfamily. Polyamine:cation symporter (PHS) (TC 2.A.3.12) family.

The protein resides in the cell membrane. In terms of biological role, probable cell membrane polyamine/proton symporter involved in the polyamine uptake in cells. The sequence is that of Probable polyamine transporter At1g31830 from Arabidopsis thaliana (Mouse-ear cress).